We begin with the raw amino-acid sequence, 393 residues long: NAD(P)H-quinone oxidoreductase subunit H, chloroplastic (393 aa).

Belongs to the complex I 49 kDa subunit family. In terms of assembly, NDH is composed of at least 16 different subunits, 5 of which are encoded in the nucleus.

The protein resides in the plastid. It localises to the chloroplast thylakoid membrane. The catalysed reaction is a plastoquinone + NADH + (n+1) H(+)(in) = a plastoquinol + NAD(+) + n H(+)(out). It carries out the reaction a plastoquinone + NADPH + (n+1) H(+)(in) = a plastoquinol + NADP(+) + n H(+)(out). In terms of biological role, NDH shuttles electrons from NAD(P)H:plastoquinone, via FMN and iron-sulfur (Fe-S) centers, to quinones in the photosynthetic chain and possibly in a chloroplast respiratory chain. The immediate electron acceptor for the enzyme in this species is believed to be plastoquinone. Couples the redox reaction to proton translocation, and thus conserves the redox energy in a proton gradient. This is NAD(P)H-quinone oxidoreductase subunit H, chloroplastic from Lobularia maritima (Sweet alyssum).